Here is a 185-residue protein sequence, read N- to C-terminus: CASP-like protein 2C1 (185 aa).

At 1–12 (MVAARVSEVKAE) the chain is on the cytoplasmic side. The helical transmembrane segment at 13 to 33 (GVLRGACAALAAAAALLVGLS) threads the bilayer. Residues 34–52 (TQTETVLLVRKKATVKDVQ) are Extracellular-facing. Residues 53 to 73 (ALWVLAMAAAAAAGYHLLQLL) traverse the membrane as a helical segment. Residues 74–105 (KCFYLGRRVGGGASPCRRSSRALAWTCLLLDK) lie on the Cytoplasmic side of the membrane. Residues 106-126 (ACAYTTFATTVAAAQACVIAL) traverse the membrane as a helical segment. Topologically, residues 127–147 (DGAHALQWTKLCNIYTRFCEQ) are extracellular. The chain crosses the membrane as a helical span at residues 148–168 (IAGSLVLGMLAAVGTAVLSAA). The Cytoplasmic portion of the chain corresponds to 169–185 (SARNVFRHYSPGTYAAH).

It belongs to the Casparian strip membrane proteins (CASP) family. Homodimer and heterodimers.

The protein resides in the cell membrane. The sequence is that of CASP-like protein 2C1 from Sorghum bicolor (Sorghum).